Here is a 475-residue protein sequence, read N- to C-terminus: Probable proline--tRNA ligase, mitochondrial (475 aa).

The transit peptide at 1 to 29 directs the protein to the mitochondrion; it reads MEGLLTRCRTLSALAACSLRHCRYIIHKC.

This sequence belongs to the class-II aminoacyl-tRNA synthetase family.

The protein resides in the mitochondrion matrix. The enzyme catalyses tRNA(Pro) + L-proline + ATP = L-prolyl-tRNA(Pro) + AMP + diphosphate. Functionally, mitochondrial aminoacyl-tRNA synthetase that catalyzes the specific attachment of the proline amino acid (aa) to the homologous transfer RNA (tRNA), further participating in protein synthesis. The reaction occurs in a two steps: proline is first activated by ATP to form Pro-AMP and then transferred to the acceptor end of tRNA(Pro). The polypeptide is Probable proline--tRNA ligase, mitochondrial (Pars2) (Mus musculus (Mouse)).